Reading from the N-terminus, the 323-residue chain is MSSKPKPIEIIGAPFSKGQPRGGVEKGPAALRKAGLVEKLKETEYNVRDHGDLAFVDVPNDSPFQIVKNPRSVGKANEQLAAVVAETQKNGTISVVLGGDHSMAIGSISGHARVHPDLCVIWVDAHTDINTPLTTSSGNLHGQPVAFLLKELKGKFPDVPGFSWVTPCISAKDIVYIGLRDVDPGEHYIIKTLGIKYFSMTEVDKLGIGKVMEETFSYLLGRKKRPIHLSFDVDGLDPVFTPATGTPVVGGLSYREGLYITEEIYKTGLLSGLDIMEVNPTLGKTPEEVTRTVNTAVALTLSCFGTKREGNHKPETDYLKPPK.

A disordered region spans residues Met-1–Gly-27. Lys-17 is subject to N6-succinyllysine. 2 positions are modified to phosphoserine: Ser-62 and Ser-72. Lys-75 carries the post-translational modification N6-succinyllysine. Mn(2+)-binding residues include His-101, Asp-124, His-126, and Asp-128. Residues His-126–Asn-130 and Ser-137–Asn-139 each bind substrate. A Phosphoserine modification is found at Ser-163. Residue Asp-183 participates in substrate binding. At Ser-217 the chain carries Phosphoserine. Mn(2+) is bound by residues Asp-232 and Asp-234. Substrate is bound by residues Thr-246 and Glu-277. Residue Thr-281 is modified to Phosphothreonine.

This sequence belongs to the arginase family. As to quaternary structure, homotrimer. Interacts with CMTM6. Mn(2+) is required as a cofactor. In terms of tissue distribution, detected in liver (at protein level).

It is found in the cytoplasm. It localises to the cytoplasmic granule. The catalysed reaction is L-arginine + H2O = urea + L-ornithine. It functions in the pathway nitrogen metabolism; urea cycle; L-ornithine and urea from L-arginine: step 1/1. Its activity is regulated as follows. Inactivated by diethyl pyrocarbonate (DEPC). Its function is as follows. Key element of the urea cycle converting L-arginine to urea and L-ornithine, which is further metabolized into metabolites proline and polyamides that drive collagen synthesis and bioenergetic pathways critical for cell proliferation, respectively; the urea cycle takes place primarily in the liver and, to a lesser extent, in the kidneys. Functions in L-arginine homeostasis in nonhepatic tissues characterized by the competition between nitric oxide synthase (NOS) and arginase for the available intracellular substrate arginine. Arginine metabolism is a critical regulator of innate and adaptive immune responses. Involved in an antimicrobial effector pathway in polymorphonuclear granulocytes (PMN). Upon PMN cell death is liberated from the phagolysosome and depletes arginine in the microenvironment leading to suppressed T cell and natural killer (NK) cell proliferation and cytokine secretion. In group 2 innate lymphoid cells (ILC2s) promotes acute type 2 inflammation in the lung and is involved in optimal ILC2 proliferation but not survival. Plays a role in the immune response of alternatively activated or M2 macrophages in processes such as wound healing and tissue regeneration, immune defense against multicellular pathogens and parasites, and immune suppression and allergic inflammation; the regulatory outcome seems to be organ specific. In tumor-infiltrating dendritic cells (DCs) and myeloid-derived suppressor cells (MDSCs) plays a role in suppression of T cell-mediated antitumor immunity. This chain is Arginase-1 (Arg1), found in Rattus norvegicus (Rat).